The sequence spans 215 residues: Pyrrolidone-carboxylate peptidase (215 aa).

Active-site residues include Glu-80, Cys-143, and His-167.

Belongs to the peptidase C15 family. Homotetramer.

It is found in the cytoplasm. The catalysed reaction is Release of an N-terminal pyroglutamyl group from a polypeptide, the second amino acid generally not being Pro.. Its function is as follows. Removes 5-oxoproline from various penultimate amino acid residues except L-proline. This is Pyrrolidone-carboxylate peptidase from Pectobacterium carotovorum subsp. carotovorum (strain PC1).